Consider the following 180-residue polypeptide: ADP-ribosylation factor 1 (180 aa).

The N-myristoyl glycine moiety is linked to residue glycine 2. Residues 24-31 (GLDAAGKT), 67-71 (DVGGQ), and 126-129 (NKQD) contribute to the GTP site.

It belongs to the small GTPase superfamily. Arf family.

It localises to the golgi apparatus. The catalysed reaction is GTP + H2O = GDP + phosphate + H(+). In terms of biological role, GTP-binding protein involved in protein trafficking; may modulate vesicle budding and uncoating within the Golgi apparatus. In Schizosaccharomyces pombe (strain 972 / ATCC 24843) (Fission yeast), this protein is ADP-ribosylation factor 1 (arf1).